We begin with the raw amino-acid sequence, 413 residues long: Histidine--tRNA ligase (413 aa).

This sequence belongs to the class-II aminoacyl-tRNA synthetase family. As to quaternary structure, homodimer.

Its subcellular location is the cytoplasm. It catalyses the reaction tRNA(His) + L-histidine + ATP = L-histidyl-tRNA(His) + AMP + diphosphate + H(+). The chain is Histidine--tRNA ligase from Wolbachia sp. subsp. Brugia malayi (strain TRS).